Reading from the N-terminus, the 117-residue chain is V-type sodium ATPase subunit F (117 aa).

Positions 1–20 are disordered; it reads MARILTRIKEAEENNQKKEE. Over residues 7–20 the composition is skewed to basic and acidic residues; sequence RIKEAEENNQKKEE.

It belongs to the V-ATPase G subunit family.

Its function is as follows. Involved in ATP-driven sodium extrusion. The sequence is that of V-type sodium ATPase subunit F (ntpF) from Enterococcus hirae (strain ATCC 9790 / DSM 20160 / JCM 8729 / LMG 6399 / NBRC 3181 / NCIMB 6459 / NCDO 1258 / NCTC 12367 / WDCM 00089 / R).